Reading from the N-terminus, the 234-residue chain is MTTANDAQQLISFIANAKKVTPVKVTYKGVLTGEIPATVQQFGGVSFGQLIGDWSEIQPLIAALPAENVFVENDARNSAVPLLDKKAVNARIEPGAIIRDQVTIGDNAVIMLGAVINIGAEIGSGTMIDMGAVLGGRAIVGEQSHIGAGAVLAGVIEPASAQPVRIGDHVLVGANAVVIEGVQVGDGAVVAAGAIVTKDVPANTVVAGVPAKIIKQIDSKTQQKTALIDALRGL.

Belongs to the transferase hexapeptide repeat family. DapH subfamily.

It carries out the reaction (S)-2,3,4,5-tetrahydrodipicolinate + acetyl-CoA + H2O = L-2-acetamido-6-oxoheptanedioate + CoA. It participates in amino-acid biosynthesis; L-lysine biosynthesis via DAP pathway; LL-2,6-diaminopimelate from (S)-tetrahydrodipicolinate (acetylase route): step 1/3. Functionally, catalyzes the transfer of an acetyl group from acetyl-CoA to tetrahydrodipicolinate. In Leuconostoc citreum (strain KM20), this protein is 2,3,4,5-tetrahydropyridine-2,6-dicarboxylate N-acetyltransferase.